The sequence spans 445 residues: Argininosuccinate synthase (445 aa).

ATP is bound by residues 17–25 and alanine 43; that span reads AFSGGLDTS. L-citrulline is bound at residue tyrosine 99. Glycine 129 and threonine 131 together coordinate ATP. 3 residues coordinate L-aspartate: threonine 131, asparagine 135, and aspartate 136. Residue asparagine 135 coordinates L-citrulline. Aspartate 136 serves as a coordination point for ATP. 2 residues coordinate L-citrulline: arginine 139 and serine 192. ATP is bound at residue aspartate 194. L-citrulline is bound by residues threonine 201, glutamate 203, and glutamate 280.

This sequence belongs to the argininosuccinate synthase family. Type 2 subfamily. In terms of assembly, homotetramer.

The protein localises to the cytoplasm. The enzyme catalyses L-citrulline + L-aspartate + ATP = 2-(N(omega)-L-arginino)succinate + AMP + diphosphate + H(+). Its pathway is amino-acid biosynthesis; L-arginine biosynthesis; L-arginine from L-ornithine and carbamoyl phosphate: step 2/3. This is Argininosuccinate synthase from Bordetella pertussis (strain Tohama I / ATCC BAA-589 / NCTC 13251).